A 336-amino-acid polypeptide reads, in one-letter code: Phospho-N-acetylmuramoyl-pentapeptide-transferase (336 aa).

10 consecutive transmembrane segments (helical) span residues 3–23 (LTLIAAIISFMVSAFTMPYFI), 53–73 (GGTVFLLVATAVSLLVSLFSI), 78–98 (SLALISGILSIVVIYGIIGFL), 118–138 (LALQLAGGLMFYFLHVSPSGI), 143–163 (VFGYQLSLGIFYLFFVLFWVV), 174–194 (GIDGLASISVVISLVTYGVIA), 200–220 (FDVLLLIGTMIGALLGFFCFN), 226–246 (VFMGDVGSLALGAMLAAISIA), 251–271 (WTLLIIGIVYVLETSSVMLQV), and 316–336 (AFLWGVGSLASLLVLAILYVF).

Belongs to the glycosyltransferase 4 family. MraY subfamily. Requires Mg(2+) as cofactor.

Its subcellular location is the cell membrane. The catalysed reaction is UDP-N-acetyl-alpha-D-muramoyl-L-alanyl-gamma-D-glutamyl-L-lysyl-D-alanyl-D-alanine + di-trans,octa-cis-undecaprenyl phosphate = Mur2Ac(oyl-L-Ala-gamma-D-Glu-L-Lys-D-Ala-D-Ala)-di-trans,octa-cis-undecaprenyl diphosphate + UMP. Its pathway is cell wall biogenesis; peptidoglycan biosynthesis. Its function is as follows. Catalyzes the initial step of the lipid cycle reactions in the biosynthesis of the cell wall peptidoglycan: transfers peptidoglycan precursor phospho-MurNAc-pentapeptide from UDP-MurNAc-pentapeptide onto the lipid carrier undecaprenyl phosphate, yielding undecaprenyl-pyrophosphoryl-MurNAc-pentapeptide, known as lipid I. This Streptococcus pyogenes serotype M4 (strain MGAS10750) protein is Phospho-N-acetylmuramoyl-pentapeptide-transferase.